The primary structure comprises 120 residues: MKRTGPTDPNLRRLIRFLKKKSNEEGVKIWKDLAWRLERPRRQRAEVNVSKINRYAKDGDMIVVPGSVLGAGKLEKKVIVAAWKFSETARKKITEAGGEAITIEELIERNPKGSGVIIME.

This sequence belongs to the eukaryotic ribosomal protein eL18 family.

The polypeptide is Large ribosomal subunit protein eL18 (Pyrococcus horikoshii (strain ATCC 700860 / DSM 12428 / JCM 9974 / NBRC 100139 / OT-3)).